The sequence spans 220 residues: Large ribosomal subunit protein uL6c (220 aa).

Residues 1 to 38 (MSLPLPSHMKSVFLGMKVEISTSVPVTRIGFWRKSVDC) constitute a chloroplast transit peptide.

In terms of assembly, component of the chloroplast large ribosomal subunit (LSU). Mature 70S chloroplast ribosomes of higher plants consist of a small (30S) and a large (50S) subunit. The 30S small subunit contains 1 molecule of ribosomal RNA (16S rRNA) and 24 different proteins. The 50S large subunit contains 3 rRNA molecules (23S, 5S and 4.5S rRNA) and 33 different proteins.

It is found in the plastid. The protein localises to the chloroplast. Functionally, component of the chloroplast ribosome (chloro-ribosome), a dedicated translation machinery responsible for the synthesis of chloroplast genome-encoded proteins, including proteins of the transcription and translation machinery and components of the photosynthetic apparatus. The chain is Large ribosomal subunit protein uL6c (RPL6) from Spinacia oleracea (Spinach).